Here is a 336-residue protein sequence, read N- to C-terminus: Solute-binding protein Csal_2479 (336 aa).

The first 33 residues, 1 to 33 (MQTNKRLKMASCVKAAAMLGMLLSVSISTTAQA), serve as a signal peptide directing secretion. Beta-D-glucuronate contacts are provided by residues histidine 42, glutamine 80, arginine 156, arginine 177, tyrosine 200, 217-218 (NN), and glutamate 244.

It belongs to the bacterial solute-binding protein 7 family. As to quaternary structure, the complex is comprised of an extracytoplasmic solute-binding protein and a heteromeric permease formed by two transmembrane proteins.

The protein resides in the periplasm. Its function is as follows. Solute-binding protein that binds D-glucuronate (in vitro). Probably part of a tripartite ATP-independent periplasmic (TRAP) transport system that mediates solute transport into the cytoplasm. In Chromohalobacter salexigens (strain ATCC BAA-138 / DSM 3043 / CIP 106854 / NCIMB 13768 / 1H11), this protein is Solute-binding protein Csal_2479.